Here is a 5588-residue protein sequence, read N- to C-terminus: Histone-lysine N-methyltransferase 2D (5588 aa).

The segment at 1–61 (MDSQKPPAED…QKPPHDCSRG (61 aa)) is disordered. Residues 104 to 149 (GPCEAVLPKEDASQIGFPEGLTPAHLGEPGGHCWAHHWCAAWSAGV) form a C2HC pre-PHD-type 1; degenerate zinc finger. PHD-type zinc fingers lie at residues 170–218 (QRCS…PEHS) and 270–323 (CPEC…CRLC). The segment at 226–276 (EARCAVCEGPGQLCDLLFCTSCGHHYHGACLDTALTARKRASWQCPECKVC) adopts a PHD-type 2; degenerate zinc-finger fold. The RING-type 1; atypical zinc finger occupies 229–274 (CAVCEGPGQLCDLLFCTSCGHHYHGACLDTALTARKRASWQCPECK). An RING-type 2; degenerate zinc finger spans residues 276–321 (CQSCRKPGNDSKMLVCETCDKGYHTFCLKPPMEDLPAHSWKCKTCR). Disordered regions lie at residues 438 to 908 (MPLL…SPII) and 922 to 1315 (LEYP…DDDT). The segment at 439 to 642 (PLLPPPEESP…VSRLSPPPEE (204 aa)) is 15 X 5 AA repeats of S/P-P-P-E/P-E/A. Over residues 440-463 (LLPPPEESPLSPPPEESPTSPPPE) the composition is skewed to pro residues. 4 repeat units span residues 442-446 (PPPEE), 460-464 (PPPEA), 469-473 (PPTEE), and 477-481 (SPPPE). A compositionally biased stretch (low complexity) spans 464 to 475 (ASRLSPPTEESP). Composition is skewed to pro residues over residues 490-512 (GCPP…PLSP) and 519-560 (LSPP…PPPE). Tandem repeats lie at residues 520 to 524 (SPPPE), 529 to 533 (SPPPE), 538 to 542 (SPPPE), and 547 to 551 (SPPPE). Residues 561 to 572 (ASRLFPPFEESP) show a composition bias toward low complexity. Pro residues predominate over residues 573–614 (LSPPPEDSPLSPPPEASRLSPPPEDSPMSPPPEDSPMSPPPE). Tandem repeats lie at residues 574–578 (SPPPE), 583–587 (SPPPE), 592–596 (SPPPE), and 610–614 (SPPPE). Residues 619–636 (LPLPVLSHLSPLPEVSRL) are compositionally biased toward low complexity. Repeat unit 15 spans residues 637 to 641 (SPPPE). Residues 637–677 (SPPPEESPLSPPPEDSPASPPPEASRLSPPPEDSPASPPPE) show a composition bias toward pro residues. Low complexity predominate over residues 696 to 712 (DSLVSLPMEESPLSPLP). Ser727 carries the post-translational modification Phosphoserine. Low complexity-rich tracts occupy residues 735 to 755 (LCPQ…CLSP), 836 to 851 (PSQS…FSPS), and 876 to 893 (LPEE…LSPQ). Composition is skewed to pro residues over residues 894–908 (LMPP…SPII), 959–973 (EPVP…PGSP), and 985–1012 (LPPP…PPAL). Residues 1013–1023 (PLSVPSPLSPV) are compositionally biased toward low complexity. The segment covering 1033-1045 (AELHEMETDKGPE) has biased composition (basic and acidic residues). PHD-type zinc fingers lie at residues 1071–1124 (PSPA…PMEV), 1121–1171 (PMEV…SQGD), and 1198–1253 (LGVS…SPAR). At Ser1107 the chain carries Phosphoserine. Over residues 1163–1172 (EISNLSQGDA) the composition is skewed to polar residues. Residues 1201 to 1251 (STDVSPARDEGSLRLCTDSLPETDDSLLCDTGTATSGGKAEGDKGRRRSSP) form an RING-type 3; atypical zinc finger. Phosphoserine is present on Ser1205. Thr1223 is modified (phosphothreonine). Ser1226 carries the phosphoserine modification. The segment covering 1245–1258 (GRRRSSPARSRIKQ) has biased composition (basic residues). Ser1562 carries the phosphoserine modification. 4 disordered regions span residues 1566 to 1721 (KRRQ…SKLE), 1751 to 1846 (GRPG…MESK), 1886 to 1962 (GLAL…SLQR), and 2095 to 2641 (SADG…QRQR). Residues 1593-1608 (PDDKKDGDLDTDDLLK) show a composition bias toward basic and acidic residues. Ser1627 carries the post-translational modification Phosphoserine. Residues 1631-1641 (ELGKEETEESK) show a composition bias toward basic and acidic residues. Basic residues-rich tracts occupy residues 1658 to 1668 (RQRKSHTRVKR) and 1709 to 1718 (KQQRRARKKS). Residues 1762–1782 (PRADGGSDRKELMTAMHKGDD) are compositionally biased toward basic and acidic residues. Ser1791 bears the Phosphoserine mark. Phosphothreonine is present on Thr1822. The span at 1831–1846 (DLDRIPTEELPKMESK) shows a compositional bias: basic and acidic residues. Composition is skewed to low complexity over residues 1886-1896 (GLALGSLPSSS) and 1936-1947 (TTPSTPTTPTTE). Positions 2151–2166 (PTYPPYPSPTGAPAQP) are enriched in pro residues. The segment covering 2170-2181 (GTTTRPGTGQPG) has biased composition (low complexity). Ser2196 carries the post-translational modification Phosphoserine. Thr2197 is subject to Phosphothreonine. Position 2203 is an N6-acetyllysine (Lys2203). Phosphoserine occurs at positions 2217 and 2231. The segment covering 2237-2249 (ESRKSLEVKKEEL) has biased composition (basic and acidic residues). Phosphoserine is present on residues Ser2266, Ser2268, and Ser2299. Pro residues-rich tracts occupy residues 2308 to 2322 (EPPP…PPSH) and 2331 to 2359 (YPDP…PPRS). Positions 2366–2388 (SRVPASPQSQSSSQSPLTPRPLS) are enriched in low complexity. The span at 2470–2486 (GQPTNFARSPGTGTFVG) shows a compositional bias: polar residues. At Arg2492 the chain carries Asymmetric dimethylarginine. Pro residues predominate over residues 2504 to 2514 (LKPPVPQPGLP). A compositionally biased stretch (low complexity) spans 2546 to 2557 (PSGSPLGPNSGP). Ser2597 is subject to Phosphoserine. Residues 2610–2622 (SSSSLATPELSSA) show a composition bias toward low complexity. Residues 2627–2665 (ISSLSQTELEKQRQRQRLRELLIRQQIQRNTLRQEKETA) adopt a coiled-coil conformation. The short motif at 2644–2648 (LRELL) is the LXXLL motif 1 element. A disordered region spans residues 2655 to 2806 (RNTLRQEKET…QLWQQQQQQQ (152 aa)). Residues 2665 to 2680 (AAAAAGAVGPPGNWGA) show a composition bias toward low complexity. Composition is skewed to polar residues over residues 2691 to 2704 (SRGQ…QDRS) and 2739 to 2748 (PSSMDMNSRQ). The stretch at 2768–2813 (LQQQQQQQQQQQQQQQQQQQQQQQQQQQQQLWQQQQQQQQQQQQQA) forms a coiled coil. Over residues 2769–2806 (QQQQQQQQQQQQQQQQQQQQQQQQQQQQQLWQQQQQQQ) the composition is skewed to low complexity. The residue at position 2829 (Arg2829) is an Asymmetric dimethylarginine. Residues 3030–3034 (LDDLL) carry the LXXLL motif 2 motif. The interval 3069 to 3104 (NEKAEREALLRGVEPVSLGPEERPPPAPDNSEPRLT) is disordered. Lys3071 bears the N6-acetyllysine mark. Phosphoserine occurs at positions 3122 and 3193. Disordered stretches follow at residues 3129-3193 (NTPK…LNPS) and 3271-3326 (QQQQ…QSMV). Over residues 3271–3284 (QQQQQQQQQQQQQQ) the composition is skewed to low complexity. Lys3430 bears the N6-acetyllysine mark. Disordered stretches follow at residues 3460 to 3496 (SGGS…TFAQ), 3593 to 3617 (RNKQ…VLAV), 3633 to 3661 (LLPA…GGMV), and 3678 to 3704 (QQQQ…NLAL). The stretch at 3559–3613 (EKLKLVTEQQSKIQKQLDQVRKQQKEHTNLMAEYRNKQQQQQQQQQQQQQQQHSA) forms a coiled coil. Positions 3596–3610 (QQQQQQQQQQQQQQQ) are enriched in low complexity. The stretch at 3712–3747 (RLLQERQLQLQQQRMQLAQKLQQQQQQQQQQQQQQH) forms a coiled coil. Arg3725 is modified (asymmetric dimethylarginine). Disordered regions lie at residues 3760–3780 (PGVQ…PSNH) and 3808–3827 (LQQQ…QGPH). Coiled coils occupy residues 3854–3883 (RLLT…QQQQ) and 3912–4052 (SLQQ…QVTL). A disordered region spans residues 4053–4249 (GPGLPVKPLQ…QGPPGAGVMP (197 aa)). Composition is skewed to low complexity over residues 4128–4159 (SQLL…PQPQ), 4172–4183 (GQQLGSGSSSES), and 4226–4240 (GSQP…QSGQ). Arg4255 is subject to Asymmetric dimethylarginine. Ser4272 is subject to Phosphoserine. Positions 4279–4283 (LQALL) match the LXXLL motif 3 motif. A disordered region spans residues 4290-4452 (QSQAVRQTPP…SSLVPGHLDQ (163 aa)). Residues 4294–4305 (VRQTPPFQEPGT) show a composition bias toward polar residues. The segment covering 4307–4322 (PSPLQGLLGCQPQPGG) has biased composition (low complexity). The LXXLL motif 4 motif lies at 4310–4314 (LQGLL). A compositionally biased stretch (polar residues) spans 4379 to 4391 (QLPSPSAQLTPTH). Ser4410 bears the Phosphoserine mark. Residues 4432–4445 (DNLTEAQKPEQSSL) are compositionally biased toward polar residues. The short motif at 4514-4518 (LQKLL) is the LXXLL motif 5 element. At Lys4516 the chain carries N6-acetyllysine. Disordered regions lie at residues 4553–4596 (LQGT…EDGV), 4664–4716 (KNNL…EGAL), and 4729–4778 (AALP…QLGS). Residues 4670 to 4684 (PPTPPSSLPPTPPPS) are compositionally biased toward pro residues. Ser4789 carries the post-translational modification Phosphoserine. Lys4807 is covalently cross-linked (Glycyl lysine isopeptide (Lys-Gly) (interchain with G-Cter in SUMO2)). Lys4827 is subject to N6-acetyllysine. The segment at 4829–4874 (KGSEVSVMLTVSAAAAKNLNGVMVAVAELLSMKIPNSYEVLFPDGP) adopts an RING-type 4; degenerate zinc-finger fold. The disordered stretch occupies residues 4877–4908 (AGLEPKKGEAEGPGGKEKGLSGKGPDTGPDWL). Over residues 4879–4896 (LEPKKGEAEGPGGKEKGL) the composition is skewed to basic and acidic residues. Lys4931 is covalently cross-linked (Glycyl lysine isopeptide (Lys-Gly) (interchain with G-Cter in SUMO2)). The segment at 4956 to 5031 (QLSAPPPEEP…SEDSRPPRLK (76 aa)) is disordered. Pro residues predominate over residues 4959–4982 (APPPEEPSPPPSPLAPSPASPPAE). The segment covering 5017-5027 (RPPEESEDSRP) has biased composition (basic and acidic residues). Residues 5041-5045 (LRLLL) carry the LXXLL motif 6 motif. Residues 5080–5120 (NRRCCFCHEEGDGATDGPARLLNLDLDLWVHLNCALWSTEV) form a C2HC pre-PHD-type 2 zinc finger. Residues 5141-5188 (TKCSLCQRTGATSSCNRMRCPNVYHFACAIRAKCMFFKDKTMLCPVHK) form a PHD-type 7 zinc finger. Positions 5226-5286 (LHMFRVGGLV…CCYRCSISEN (61 aa)) constitute an FYR N-terminal domain. The FYR C-terminal domain occupies 5287-5372 (NGRPEFVIKV…ESCQNYLFRY (86 aa)). The short motif at 5388-5393 (GCARSE) is the WDR5 interaction motif (WIN) element. The region spanning 5448 to 5564 (NNVYLARSRI…KGEELTYDYQ (117 aa)) is the SET domain. S-adenosyl-L-methionine contacts are provided by residues Tyr5502 and 5525 to 5526 (NH). Cys5528, Cys5576, Cys5578, and Cys5583 together coordinate Zn(2+). In terms of domain architecture, Post-SET spans 5572-5588 (HKIPCHCGAWNCRKWMN).

This sequence belongs to the class V-like SAM-binding methyltransferase superfamily. Histone-lysine methyltransferase family. TRX/MLL subfamily. As to quaternary structure, component of the MLL2 complex (also named ASCOM complex), at least composed of catalytic subunit KMT2D/MLL2, ASH2L, RBBP5, WDR5, NCOA6, DPY30, KDM6A, PAXIP1/PTIP, PAGR1 and alpha- and beta-tubulin. Forms a core complex with the evolutionary conserved subcomplex WRAD composed of WDR5, RBBP5, ASH2L/ASH2 and DPY30 subunits; WRAD differentially stimulates the methyltransferase activity. Interacts with ESR1; interaction is direct. Interacts (via WIN motif) with WDR5.

The protein resides in the nucleus. The enzyme catalyses L-lysyl(4)-[histone H3] + S-adenosyl-L-methionine = N(6)-methyl-L-lysyl(4)-[histone H3] + S-adenosyl-L-homocysteine + H(+). Its function is as follows. Histone methyltransferase that catalyzes methyl group transfer from S-adenosyl-L-methionine to the epsilon-amino group of 'Lys-4' of histone H3 (H3K4). Part of chromatin remodeling machinery predominantly forms H3K4me1 methylation marks at active chromatin sites where transcription and DNA repair take place. Acts as a coactivator for estrogen receptor by being recruited by ESR1, thereby activating transcription. This is Histone-lysine N-methyltransferase 2D (Kmt2d) from Mus musculus (Mouse).